We begin with the raw amino-acid sequence, 342 residues long: Ferredoxin--NADP reductase (342 aa).

Residues Cys-17, Asp-36, Gln-44, Tyr-49, Ile-89, Phe-124, Asp-289, and Thr-330 each contribute to the FAD site.

The protein belongs to the ferredoxin--NADP reductase type 2 family. Homodimer. The cofactor is FAD.

The catalysed reaction is 2 reduced [2Fe-2S]-[ferredoxin] + NADP(+) + H(+) = 2 oxidized [2Fe-2S]-[ferredoxin] + NADPH. This is Ferredoxin--NADP reductase from Rhodopseudomonas palustris (strain HaA2).